The following is a 360-amino-acid chain: Lipid-A-disaccharide synthase (360 aa).

Belongs to the LpxB family.

It catalyses the reaction a lipid X + a UDP-2-N,3-O-bis[(3R)-3-hydroxyacyl]-alpha-D-glucosamine = a lipid A disaccharide + UDP + H(+). Its pathway is bacterial outer membrane biogenesis; LPS lipid A biosynthesis. Condensation of UDP-2,3-diacylglucosamine and 2,3-diacylglucosamine-1-phosphate to form lipid A disaccharide, a precursor of lipid A, a phosphorylated glycolipid that anchors the lipopolysaccharide to the outer membrane of the cell. This is Lipid-A-disaccharide synthase from Helicobacter acinonychis (strain Sheeba).